We begin with the raw amino-acid sequence, 413 residues long: O-methyltransferase kntB (413 aa).

S-adenosyl-L-methionine-binding positions include 255 to 256 (GG), Asp-280, 302 to 303 (NF), and Arg-319. His-322 acts as the Proton acceptor in catalysis.

The protein belongs to the class I-like SAM-binding methyltransferase superfamily. Cation-independent O-methyltransferase family. S-adenosyl-L-methionine is required as a cofactor.

The protein operates within secondary metabolite biosynthesis. Functionally, non-reducing polyketide synthase; part of the gene cluster that mediates the biosynthesis of the bicoumarin kotanin. The non-reducing polyketide synthase ktnS first catalyzes the formation of the pentaketidic 4,7-dihydroxy-5-methylcoumarin from acetyl coenzyme A and 4 malonyl coenzyme A molecules. Further O-methylation by ktnB leads to the formation of 7-demethylsiderin. Then, an oxidative phenol coupling catalyzed by the cytochrome P450 monooxygenase ktnC forms the 8,8'-dimer P-orlandin via dimerization the monomeric precursor, 7-demethylsiderin. P-orlandin is subsequently O-methylated in a stepwise fashion to demethylkotanin and kotanin. The sequence is that of O-methyltransferase kntB from Aspergillus niger (strain ATCC MYA-4892 / CBS 513.88 / FGSC A1513).